A 123-amino-acid chain; its full sequence is Fluoride-specific ion channel FluC 2 (123 aa).

4 helical membrane passes run 3 to 23 (LDGF…RMFI), 38 to 58 (ILIV…LNIT), 62 to 82 (LILF…SFIY), and 94 to 114 (LILL…FCLG). Residues Gly72 and Ser75 each contribute to the Na(+) site.

This sequence belongs to the fluoride channel Fluc/FEX (TC 1.A.43) family.

The protein localises to the cell inner membrane. The catalysed reaction is fluoride(in) = fluoride(out). With respect to regulation, na(+) is not transported, but it plays an essential structural role and its presence is essential for fluoride channel function. In terms of biological role, fluoride-specific ion channel. Important for reducing fluoride concentration in the cell, thus reducing its toxicity. This Prochlorococcus marinus subsp. pastoris (strain CCMP1986 / NIES-2087 / MED4) protein is Fluoride-specific ion channel FluC 2.